A 189-amino-acid chain; its full sequence is GTP cyclohydrolase 1 (189 aa).

Zn(2+) is bound by residues Cys-78, His-81, and Cys-150.

Belongs to the GTP cyclohydrolase I family. Homomer.

It catalyses the reaction GTP + H2O = 7,8-dihydroneopterin 3'-triphosphate + formate + H(+). It functions in the pathway cofactor biosynthesis; 7,8-dihydroneopterin triphosphate biosynthesis; 7,8-dihydroneopterin triphosphate from GTP: step 1/1. This is GTP cyclohydrolase 1 from Bacillus cytotoxicus (strain DSM 22905 / CIP 110041 / 391-98 / NVH 391-98).